An 858-amino-acid chain; its full sequence is Low-density lipoprotein receptor-related protein 12 (858 aa).

The signal sequence occupies residues 1–32; the sequence is MARRWSTKESQRRGSAWLLLFLAGVYGNGALA. The Extracellular segment spans residues 33–492; it reads ELSENVHISG…ENCPVIVPTR (460 aa). 9 disulfide bridges follow: C47/C76, C103/C122, C166/C178, C173/C191, C185/C200, C215/C232, C222/C245, C239/C254, and C259/C285. Positions 47-159 constitute a CUB 1 domain; it reads CGESPEQIRA…KGFRLAYFSG (113 aa). A glycan (N-linked (GlcNAc...) asparagine) is linked at N75. 2 consecutive LDL-receptor class A domains span residues 165 to 201 and 214 to 255; these read DCACDQFRCGNGKCIPEAWKCNSMDECGDSSDEEVCA and PCAY…IDCD. The 114-residue stretch at 259–372 folds into the CUB 2 domain; it reads CGQWLKYFYG…RGFNATYQVD (114 aa). Residues N284 and N366 are each glycosylated (N-linked (GlcNAc...) asparagine). 3 consecutive LDL-receptor class A domains span residues 374 to 411, 412 to 449, and 450 to 486; these read FCLPWEIPCGGNWGCYTEQQRCDGYWHCPNGRDEINCT, MCQKEEFPCSRNGVCYPRSDRCNYQNHCPNGSDEKNCF, and FCQPGNFHCKNNRCVFESWVCDSQDDCGDGSDEENCP. 9 disulfides stabilise this stretch: C375-C388, C382-C401, C395-C410, C413-C426, C420-C439, C433-C448, C451-C463, C458-C476, and C470-C485. N-linked (GlcNAc...) asparagine glycosylation occurs at N409. A glycan (N-linked (GlcNAc...) asparagine) is linked at N441. A helical membrane pass occupies residues 493–513; that stretch reads VITAAVIGSLICGLLLVIALG. The Cytoplasmic portion of the chain corresponds to 514–858; it reads CTCKLYSLRM…TSDDEALLLC (345 aa). 2 disordered regions span residues 619 to 721 and 746 to 767; these read ALVS…VSPA and SSSTTQNRSPLRQLDTAVSGRE. Positions 712–721 are enriched in low complexity; the sequence is SVEAPSVSPA. Positions 746–755 are enriched in polar residues; the sequence is SSSTTQNRSP.

The protein belongs to the LDLR family. In terms of assembly, may interact with RACK1, ZFYVE9 and NMRK2.

The protein resides in the membrane. It is found in the coated pit. Its function is as follows. Probable receptor, which may be involved in the internalization of lipophilic molecules and/or signal transduction. May act as a tumor suppressor. The sequence is that of Low-density lipoprotein receptor-related protein 12 (Lrp12) from Mus musculus (Mouse).